We begin with the raw amino-acid sequence, 115 residues long: Nucleoid-associated protein alr5067 (115 aa).

This sequence belongs to the YbaB/EbfC family. Homodimer.

The protein localises to the cytoplasm. Its subcellular location is the nucleoid. Binds to DNA and alters its conformation. May be involved in regulation of gene expression, nucleoid organization and DNA protection. In Nostoc sp. (strain PCC 7120 / SAG 25.82 / UTEX 2576), this protein is Nucleoid-associated protein alr5067.